Consider the following 220-residue polypeptide: dTTP/UTP pyrophosphatase (220 aa).

D83 (proton acceptor) is an active-site residue.

This sequence belongs to the Maf family. YhdE subfamily. It depends on a divalent metal cation as a cofactor.

The protein resides in the cytoplasm. It carries out the reaction dTTP + H2O = dTMP + diphosphate + H(+). The enzyme catalyses UTP + H2O = UMP + diphosphate + H(+). Nucleoside triphosphate pyrophosphatase that hydrolyzes dTTP and UTP. May have a dual role in cell division arrest and in preventing the incorporation of modified nucleotides into cellular nucleic acids. This is dTTP/UTP pyrophosphatase from Syntrophotalea carbinolica (strain DSM 2380 / NBRC 103641 / GraBd1) (Pelobacter carbinolicus).